The sequence spans 675 residues: MNRFFNRELSWLAFNTRVLNEAKDESLPLLERLKFLAIYDTNLDEFYMIRVAGLKQLYEHKIASKGIDGASPEEQLEKIKHYLAHEIEERELEFQKIQALLFKKGLCITPYNELNLEQKAKAKTYFKEQLYALVLPFKLDSSHTFPPLANLTFALFAHIKDKETQSASYALIKLPSFIFRFVELEKGLFALAEEIVEAHLEELFLEHEILDCMAFRVTCDADIAITEDEAHDYADLMSKSLRKRNQGEIVRLQTQKGSQELLKTLLASLRSFQTHSYKKHKLTGMHIYKSAIMLNLGDLWELVNHSDFKALKSPNFTPKIHPHFNENDLFKSIEKQDLLLFHPYESFEPVIDLIEQAASDPTTLSIKMTLYRVGKHSPIVKALIEAASKIQVSVLVELKARFDEESNLHWAKALERAGALVVYGVFKLKVHAKMLVITKKTDNQLRHFTHLSTGNYNPLSAKIYTDVSFFSAKNEIANDIIKLFHSLLTSSATSNTLETLFMAPKQIKPKIIELIQNEMNHKQEGYIILKANALVDSEIIEWLYQASQKGVKIDLIIRGICCLKPQVKGLSENIRVYSIVGKYLEHARIYYFKHENIYFSSADLMPRNLERRVELLIPATNPKIANKLLHILEIQLKDTLKRYELNSKGRYAKISNPNDPLNSQDYFEKQALKTL.

Asn42 provides a ligand contact to ATP. Mg(2+)-binding residues include Arg372 and Arg401. His431 acts as the Phosphohistidine intermediate in catalysis. Residues Tyr464, Arg558, and His586 each coordinate ATP.

This sequence belongs to the polyphosphate kinase 1 (PPK1) family. Requires Mg(2+) as cofactor. Post-translationally, an intermediate of this reaction is the autophosphorylated ppk in which a phosphate is covalently linked to a histidine residue through a N-P bond.

It carries out the reaction [phosphate](n) + ATP = [phosphate](n+1) + ADP. Functionally, catalyzes the reversible transfer of the terminal phosphate of ATP to form a long-chain polyphosphate (polyP). The polypeptide is Polyphosphate kinase (Helicobacter pylori (strain J99 / ATCC 700824) (Campylobacter pylori J99)).